The sequence spans 166 residues: Large ribosomal subunit protein uL10 (166 aa).

Belongs to the universal ribosomal protein uL10 family. As to quaternary structure, part of the ribosomal stalk of the 50S ribosomal subunit. The N-terminus interacts with L11 and the large rRNA to form the base of the stalk. The C-terminus forms an elongated spine to which L12 dimers bind in a sequential fashion forming a multimeric L10(L12)X complex.

In terms of biological role, forms part of the ribosomal stalk, playing a central role in the interaction of the ribosome with GTP-bound translation factors. The chain is Large ribosomal subunit protein uL10 from Streptococcus equi subsp. zooepidemicus (strain MGCS10565).